Consider the following 189-residue polypeptide: GTPase NRas (189 aa).

GTP contacts are provided by residues 10-18 (GAGGVGKSA) and 29-30 (VD). An Effector region motif is present at residues 32-40 (YDPTIEDSY). (Microbial infection) O-linked (Glc) threonine; by P.sordellii toxin TcsL glycosylation occurs at T35. 57–61 (DTAGQ) contributes to the GTP binding site. S89 carries the phosphoserine modification. Position 116–119 (116–119 (NKCD)) interacts with GTP. A hypervariable region region spans residues 166–185 (YRMKKLNSSDDGTQGCMGLP). K170 is covalently cross-linked (Glycyl lysine isopeptide (Lys-Gly) (interchain with G-Cter in ubiquitin)). C181 carries the S-palmitoyl cysteine lipid modification. The S-farnesyl cysteine moiety is linked to residue C186. Residues 187 to 189 (VVM) constitute a propeptide, removed in mature form.

Belongs to the small GTPase superfamily. Ras family. Interacts (active GTP-bound form preferentially) with RGS14. Interacts (active GTP-bound form) with RASSF7. Interacts (active GTP-bound form) with both SHOC2 and PP1c (all isoforms) to form a tertiary complex; SHOC2 and PP1c preferably bind M-Ras/MRAS, but they also bind K-Ras/KRAS, N-Ras/NRAS and H-Ras/HRAS. Palmitoylated by the ZDHHC9-GOLGA7 complex. Depalmitoylated by ABHD17A, ABHD17B and ABHD17C. A continuous cycle of de- and re-palmitoylation regulates rapid exchange between plasma membrane and Golgi. Post-translationally, acetylation at Lys-104 prevents interaction with guanine nucleotide exchange factors (GEFs). In terms of processing, fatty-acylated at Lys-169 and/or Lys-170. Ubiquitinated by the BCR(LZTR1) E3 ubiquitin ligase complex at Lys-170 in a non-degradative manner, leading to inhibit Ras signaling by decreasing Ras association with membranes. Post-translationally, phosphorylation at Ser-89 enhances NRAS association with its downstream effectors. In terms of processing, (Microbial infection) Glucosylated at Thr-35 by P.sordellii toxin TcsL.

It localises to the cell membrane. Its subcellular location is the golgi apparatus membrane. The enzyme catalyses GTP + H2O = GDP + phosphate + H(+). With respect to regulation, alternates between an inactive form bound to GDP and an active form bound to GTP. Activated by a guanine nucleotide-exchange factor (GEF) and inactivated by a GTPase-activating protein (GAP). In terms of biological role, ras proteins bind GDP/GTP and possess intrinsic GTPase activity. The polypeptide is GTPase NRas (NRAS) (Homo sapiens (Human)).